The sequence spans 201 residues: Recombination protein RecR (201 aa).

The C4-type zinc-finger motif lies at 57-74 (CSICGNITATDTDPCVIC). Residues 82–178 (STVFVVENSR…AVTRLAHGLA (97 aa)) enclose the Toprim domain.

It belongs to the RecR family.

Functionally, may play a role in DNA repair. It seems to be involved in an RecBC-independent recombinational process of DNA repair. It may act with RecF and RecO. This chain is Recombination protein RecR, found in Leuconostoc mesenteroides subsp. mesenteroides (strain ATCC 8293 / DSM 20343 / BCRC 11652 / CCM 1803 / JCM 6124 / NCDO 523 / NBRC 100496 / NCIMB 8023 / NCTC 12954 / NRRL B-1118 / 37Y).